A 117-amino-acid chain; its full sequence is DNA-directed RNA polymerase subunit omega (117 aa).

The span at 96–105 (KEEAEEEAKQ) shows a compositional bias: basic and acidic residues. Residues 96 to 117 (KEEAEEEAKQKNSRAAKAAAAE) are disordered. Residues 108–117 (SRAAKAAAAE) are compositionally biased toward low complexity.

The protein belongs to the RNA polymerase subunit omega family. In terms of assembly, the RNAP catalytic core consists of 2 alpha, 1 beta, 1 beta' and 1 omega subunit. When a sigma factor is associated with the core the holoenzyme is formed, which can initiate transcription.

It carries out the reaction RNA(n) + a ribonucleoside 5'-triphosphate = RNA(n+1) + diphosphate. Functionally, promotes RNA polymerase assembly. Latches the N- and C-terminal regions of the beta' subunit thereby facilitating its interaction with the beta and alpha subunits. In Lactococcus lactis subsp. cremoris (strain MG1363), this protein is DNA-directed RNA polymerase subunit omega.